A 1427-amino-acid chain; its full sequence is A disintegrin and metalloproteinase with thrombospondin motifs 13 (1427 aa).

The first 29 residues, 1–29, serve as a signal peptide directing secretion; it reads MHQRHPRARCPPLCVAGILACGFLLGCWG. Positions 30–74 are excised as a propeptide; it reads PSHFQQSCLQALEPQAVSSYLSPGAPLKGRPPSPGFQRQRQRQRR. Residues 51-70 form a disordered region; the sequence is SPGAPLKGRPPSPGFQRQRQ. One can recognise a Peptidase M12B domain in the interval 80-286; the sequence is LHLELLVAVG…GRARCVWDPP (207 aa). Glutamate 83 provides a ligand contact to Ca(2+). Asparagine 142 and asparagine 146 each carry an N-linked (GlcNAc...) asparagine glycan. Intrachain disulfides connect cysteine 155–cysteine 208, cysteine 202–cysteine 281, and cysteine 242–cysteine 265. Ca(2+)-binding residues include aspartate 173, aspartate 182, glutamate 184, aspartate 187, and glutamate 212. Histidine 224 provides a ligand contact to Zn(2+). Glutamate 225 is a catalytic residue. 2 residues coordinate Zn(2+): histidine 228 and histidine 234. 2 residues coordinate Ca(2+): cysteine 281 and aspartate 284. Residues 287 to 383 form the Disintegrin domain; that stretch reads RPQPGSAGHP…LVELTPIAAV (97 aa). 4 disulfide bridges follow: cysteine 311–cysteine 337, cysteine 322–cysteine 347, cysteine 332–cysteine 366, and cysteine 360–cysteine 371. Residues 384 to 439 form the TSP type-1 1 domain; the sequence is HGRWSSWGPRSPCSRSCGGGVVTRRRQCNNPRPAFGGRACVGADLQAEMCNTQACE. A glycan (C-linked (Man) tryptophan) is linked at tryptophan 387. Cystine bridges form between cysteine 396/cysteine 433, cysteine 400/cysteine 438, cysteine 411/cysteine 423, cysteine 450/cysteine 487, cysteine 483/cysteine 522, cysteine 508/cysteine 527, cysteine 532/cysteine 548, and cysteine 545/cysteine 555. Residue serine 399 is glycosylated (O-linked (Fuc...) serine). The cysteine-rich stretch occupies residues 440-556; that stretch reads KTQLEFMSQQ…VCGGDNSTCS (117 aa). The Cell attachment site motif lies at 498–500; that stretch reads RGD. Residues asparagine 552, asparagine 579, and asparagine 614 are each glycosylated (N-linked (GlcNAc...) asparagine). Positions 556–685 are spacer; sequence SPRKGSFTAG…TYFQPKPRQA (130 aa). Asparagine 667 is a glycosylation site (N-linked (GlcNAc...) (complex) asparagine). TSP type-1 domains lie at 682–730, 742–805, 808–859, 896–950, 951–1011, 1012–1068, and 1072–1131; these read PRQA…SQQP, CPPY…QPCP, WEVS…PEPC, VWTP…QAVP, CPAR…SLEP, CPPR…VPCL, and CTYR…GPCV. A glycan (O-linked (Fuc...) serine) is linked at serine 698. Asparagine 707 carries an N-linked (GlcNAc...) (complex) asparagine glycan. The O-linked (Fuc...) serine glycan is linked to serine 757. A glycan (N-linked (GlcNAc...) asparagine) is linked at asparagine 828. 4 O-linked (Fuc...) serine glycosylation sites follow: serine 907, serine 965, serine 1027, and serine 1087. CUB domains are found at residues 1192–1298 and 1299–1427; these read CGRQ…FYRE and CDMQ…KEGT. 2 N-linked (GlcNAc...) asparagine glycosylation sites follow: asparagine 1235 and asparagine 1354.

Zn(2+) serves as cofactor. It depends on Ca(2+) as a cofactor. Post-translationally, glycosylated. O-fucosylated by POFUT2 on a serine or a threonine residue found within the consensus sequence C1-X(2)-(S/T)-C2-G of the TSP type-1 repeat domains where C1 and C2 are the first and second cysteine residue of the repeat, respectively. Fucosylated repeats can then be further glycosylated by the addition of a beta-1,3-glucose residue by the glucosyltransferase, B3GALTL. Fucosylation mediates the efficient secretion of ADAMTS13. May also be C-glycosylated on tryptophan residues within the consensus sequence W-X-X-W of the TPRs, and also N-glycosylated. These other glycosylations can also facilitate secretion. The precursor is processed by a furin endopeptidase which cleaves off the pro-domain. As to expression, plasma. Expressed primarily in liver.

The protein localises to the secreted. The catalysed reaction is The enzyme cleaves the von Willebrand factor at bond 842-Tyr-|-Met-843 within the A2 domain.. With respect to regulation, zinc and calcium ions cooperatively modulate enzyme activity. The cleavage of the pro-domain is not required for protease activity. Dependence on calcium for proteolytic activity is mediated by the high affinity site. Its function is as follows. Cleaves the vWF multimers in plasma into smaller forms thereby controlling vWF-mediated platelet thrombus formation. The protein is A disintegrin and metalloproteinase with thrombospondin motifs 13 (ADAMTS13) of Homo sapiens (Human).